A 539-amino-acid polypeptide reads, in one-letter code: Chaperonin GroEL (539 aa).

ATP contacts are provided by residues 29–32 (TLGP), 86–90 (DGTTT), Gly413, 476–478 (NAA), and Asp492.

Belongs to the chaperonin (HSP60) family. In terms of assembly, forms a cylinder of 14 subunits composed of two heptameric rings stacked back-to-back. Interacts with the co-chaperonin GroES.

It localises to the cytoplasm. The catalysed reaction is ATP + H2O + a folded polypeptide = ADP + phosphate + an unfolded polypeptide.. Its function is as follows. Together with its co-chaperonin GroES, plays an essential role in assisting protein folding. The GroEL-GroES system forms a nano-cage that allows encapsulation of the non-native substrate proteins and provides a physical environment optimized to promote and accelerate protein folding. This Macrococcus caseolyticus (strain JCSC5402) (Macrococcoides caseolyticum) protein is Chaperonin GroEL.